A 1504-amino-acid chain; its full sequence is DNA-directed RNA polymerase subunit beta' (1504 aa).

Zn(2+) contacts are provided by Cys-60, Cys-62, Cys-75, and Cys-78. The tract at residues 265 to 294 (RKQRDLEDAEQLTGAERERKEYEASQERER) is disordered. The span at 279–294 (AERERKEYEASQERER) shows a compositional bias: basic and acidic residues. Mg(2+) contacts are provided by Asp-626, Asp-628, and Asp-630. Zn(2+) contacts are provided by Cys-1002, Cys-1075, Cys-1082, and Cys-1085. Residues 1468 to 1504 (RALIGGDGDDGERNNGDFDDQVGEDVVIPPDDDDQEA) are disordered.

Belongs to the RNA polymerase beta' chain family. In terms of assembly, the RNAP catalytic core consists of 2 alpha, 1 beta, 1 beta' and 1 omega subunit. When a sigma factor is associated with the core the holoenzyme is formed, which can initiate transcription. Mg(2+) is required as a cofactor. It depends on Zn(2+) as a cofactor.

The catalysed reaction is RNA(n) + a ribonucleoside 5'-triphosphate = RNA(n+1) + diphosphate. DNA-dependent RNA polymerase catalyzes the transcription of DNA into RNA using the four ribonucleoside triphosphates as substrates. This Roseiflexus sp. (strain RS-1) protein is DNA-directed RNA polymerase subunit beta'.